The following is a 335-amino-acid chain: E3 ubiquitin ligase rnf-121 (335 aa).

Residues 1–47 (MGQHGAIRLQNEVQEGMPPPHELTEEEQWAEEHRKMHEKHKGHEAMH) are Cytoplasmic-facing. A helical transmembrane segment spans residues 48–68 (MEMMVIFMISVIVGQIFLVTW). Over 69–72 (KRKH) the chain is Lumenal. Residues 73–93 (FKSYQMCTLIGMLTIPVYVCF) form a helical membrane-spanning segment. Topologically, residues 94–99 (NRSWYR) are cytoplasmic. A helical membrane pass occupies residues 100–120 (FLATWLVFCIFSAFIWLKASA). The Lumenal segment spans residues 121–143 (QHISGGTPRFVYKWFLFLHKLSY). The chain crosses the membrane as a helical span at residues 144 to 164 (VLGVVGYLIMMGALLGFHVLF). Residues 165–168 (GVSQ) are Cytoplasmic-facing. Residues 169-189 (PTLMDAGILFMFYGVYYGVLG) form a helical membrane-spanning segment. The Lumenal portion of the chain corresponds to 190–335 (RDFAHICTAR…QGLTTWMGLE (146 aa)). Residues 222-284 (CAVCGGRLDD…GKLQTCPYCK (63 aa)) form an RING-type; atypical zinc finger.

It belongs to the RNF121 family. Expressed in body wall muscles, the hypodermis, seam cells, vulval cells, spermathecal cells, uterine cells and the distal tip cell (at protein level).

The protein localises to the endoplasmic reticulum membrane. Its subcellular location is the golgi apparatus membrane. The enzyme catalyses S-ubiquitinyl-[E2 ubiquitin-conjugating enzyme]-L-cysteine + [acceptor protein]-L-lysine = [E2 ubiquitin-conjugating enzyme]-L-cysteine + N(6)-ubiquitinyl-[acceptor protein]-L-lysine.. Its pathway is protein modification; protein ubiquitination. E3 ubiquitin ligase which accepts ubiquitin and transfers it to substrates such as the beta-integrin subunit pat-3, promoting their degradation by the endoplasmic reticulum-associated degradation (ERAD) pathway which is a pathway involved in ubiquitin-dependent degradation of misfolded endoplasmic reticulum proteins. Negatively regulates the unfolded protein response to reduce endoplasmic reticulum stress. Required for the cessation of distal tip cell migration at the end of larval morphogenesis. Plays a role in germline and gonad development. This is E3 ubiquitin ligase rnf-121 from Caenorhabditis elegans.